Here is a 156-residue protein sequence, read N- to C-terminus: Transcription elongation factor GreA (156 aa).

The protein belongs to the GreA/GreB family.

Its function is as follows. Necessary for efficient RNA polymerase transcription elongation past template-encoded arresting sites. The arresting sites in DNA have the property of trapping a certain fraction of elongating RNA polymerases that pass through, resulting in locked ternary complexes. Cleavage of the nascent transcript by cleavage factors such as GreA or GreB allows the resumption of elongation from the new 3'terminus. GreA releases sequences of 2 to 3 nucleotides. The chain is Transcription elongation factor GreA from Thermomicrobium roseum (strain ATCC 27502 / DSM 5159 / P-2).